An 873-amino-acid chain; its full sequence is MIKKFDKKDEESGSGSNPFQHLEKSAVLQEARIFNETPINPRRCLHILTKIIYLLNQGEHFGTTEATEAFFAMTRLFQSNDQTLRRMCYLTIKEMANISEDVIIVTSSLTKDMTGKEDVYRGPAIRALCRITDTTMLQAIERYMKQAIVDKVPSVSSSALVSSLHMVKMSFDVVKRWVNEAQEAASSDNIMVQYHALGLLYHLRKNDRLAVTKMLNKFTKSGLKSPFAYCMMIRIASKLLEETEGGHDSPLFDFIESCLRNKHEMVVYEAASAIVHMPNCTARELAPAVSVLQLFCSSPKAALRYAAVRTLNKVAMKHPSAVTACNLDLENLITDSNRSIATLAITTLLKTGSESSVDRLMKQISSFVSEISDEFKVVVVQAISALCQKYPRKHSVMMNFLSNMLRDDGGFEYKRAIVDCIISIIEENPESKETGLAHLCEFIEDCEHTVLATKILHLLGKEGPRTPTPSKYIRFIFNRVVLESEAVRAAAVSALAKFGAQNDDLLPSVLVLMQRCMMDSDDEVRDRATFYMNVLQQKQKALNAAYIFNGLSVSVLGLEKSLHQYTLEPSEKPFDMKTVPLATAPITEHKTEIAPVATSKLPEKLAPSRQDIYQEQLSAIPEFQGLGPLFKSSEPVQLTEAETEYVVRCIKHTFANHMIFQFDCTNTLNDQLLQKVLVQMEPSESYEVLHYVPAANLPYSQPGSCYSLVRLPEDDPTAVSCTFSCTMKYLVRDCDPNTGEPDDDGYDDEYVLEDLEVTVADHIQKVLKPNFAAAWDEVGDECEKEETFALATVRTLDEAVNNIVSFLGMQPCERSDKVPENKNSHVLFLAGVFRGGHDVLVRARLALADGVTIQVTVRSTDDNVVDVILASVG.

The segment covering 1–11 (MIKKFDKKDEE) has biased composition (basic and acidic residues). A disordered region spans residues 1–21 (MIKKFDKKDEESGSGSNPFQH). HEAT repeat units lie at residues 64-101 (TEAT…ISED), 283-320 (RELA…KHPS), 321-355 (AVTA…GSES), 356-392 (SVDR…KYPR), 395-430 (SVMM…ENPE), and 467-504 (PTPS…QNDD).

This sequence belongs to the COPG family. As to quaternary structure, oligomeric complex.

The protein localises to the cytoplasm. The protein resides in the golgi apparatus membrane. Its subcellular location is the cytoplasmic vesicle. It is found in the COPI-coated vesicle membrane. In terms of biological role, the coatomer is a cytosolic protein complex that binds to dilysine motifs and reversibly associates with Golgi non-clathrin-coated vesicles, which further mediate biosynthetic protein transport from the ER, via the Golgi up to the trans Golgi network. Coatomer complex is required for budding from Golgi membranes, and is essential for the retrograde Golgi-to-ER transport of dilysine-tagged proteins. The polypeptide is Coatomer subunit gamma-2 (copg2) (Danio rerio (Zebrafish)).